A 238-amino-acid chain; its full sequence is Probable transcriptional regulatory protein Sde_1551 (238 aa).

The protein belongs to the TACO1 family.

The protein resides in the cytoplasm. This Saccharophagus degradans (strain 2-40 / ATCC 43961 / DSM 17024) protein is Probable transcriptional regulatory protein Sde_1551.